We begin with the raw amino-acid sequence, 98 residues long: ESAT-6-like protein EsxM (98 aa).

Belongs to the WXG100 family. CFP-10 subfamily.

It localises to the secreted. In Mycobacterium bovis (strain ATCC BAA-935 / AF2122/97), this protein is ESAT-6-like protein EsxM (esxM).